The sequence spans 107 residues: Replication restart protein PriB (107 aa).

The region spanning 8 to 107 (IENRLSLIGV…LHAEHIELLD (100 aa)) is the SSB domain.

The protein belongs to the PriB family. Homodimer. Interacts with PriA and DnaT. Component of the replication restart primosome. Primosome assembly occurs via a 'hand-off' mechanism. PriA binds to replication forks, subsequently PriB then DnaT bind; DnaT then displaces ssDNA to generate the helicase loading substrate.

Functionally, involved in the restart of stalled replication forks, which reloads the replicative helicase on sites other than the origin of replication; the PriA-PriB pathway is the major replication restart pathway. During primosome assembly it facilitates complex formation between PriA and DnaT on DNA; stabilizes PriA on DNA. Stimulates the DNA unwinding activity of PriA helicase. The protein is Replication restart protein PriB of Actinobacillus succinogenes (strain ATCC 55618 / DSM 22257 / CCUG 43843 / 130Z).